The following is a 204-amino-acid chain: Elongation factor Ts (204 aa).

Positions 80–83 are involved in Mg(2+) ion dislocation from EF-Tu; it reads TDFV.

It belongs to the EF-Ts family.

The protein localises to the cytoplasm. Associates with the EF-Tu.GDP complex and induces the exchange of GDP to GTP. It remains bound to the aminoacyl-tRNA.EF-Tu.GTP complex up to the GTP hydrolysis stage on the ribosome. This Caldicellulosiruptor saccharolyticus (strain ATCC 43494 / DSM 8903 / Tp8T 6331) protein is Elongation factor Ts.